The chain runs to 673 residues: UvrABC system protein B (673 aa).

The region spanning 26–414 (ANFEAGLAKQ…AGEITELVVR (389 aa)) is the Helicase ATP-binding domain. 39–46 (GVTGSGKT) contributes to the ATP binding site. Residues 92–115 (YYDYYQPEAYVPSSDTFIEKDSSI) carry the Beta-hairpin motif. Positions 431–597 (QVDDLMSEVH…SVARPISDIM (167 aa)) constitute a Helicase C-terminal domain. A disordered region spans residues 601–626 (REDAAEKKAGKGRSKSRQVAEEPADY). The UVR domain maps to 635-670 (AGKLKALEQKMYQHAKDLEFEAAAQIRDQILKLKAA).

The protein belongs to the UvrB family. Forms a heterotetramer with UvrA during the search for lesions. Interacts with UvrC in an incision complex.

Its subcellular location is the cytoplasm. The UvrABC repair system catalyzes the recognition and processing of DNA lesions. A damage recognition complex composed of 2 UvrA and 2 UvrB subunits scans DNA for abnormalities. Upon binding of the UvrA(2)B(2) complex to a putative damaged site, the DNA wraps around one UvrB monomer. DNA wrap is dependent on ATP binding by UvrB and probably causes local melting of the DNA helix, facilitating insertion of UvrB beta-hairpin between the DNA strands. Then UvrB probes one DNA strand for the presence of a lesion. If a lesion is found the UvrA subunits dissociate and the UvrB-DNA preincision complex is formed. This complex is subsequently bound by UvrC and the second UvrB is released. If no lesion is found, the DNA wraps around the other UvrB subunit that will check the other stand for damage. This is UvrABC system protein B from Xanthomonas campestris pv. campestris (strain 8004).